An 813-amino-acid chain; its full sequence is Sodium/hydrogen exchanger 2 (813 aa).

Transmembrane regions (helical) follow at residues isoleucine 108 to glycine 128, threonine 139 to proline 159, isoleucine 170 to phenylalanine 190, leucine 210 to isoleucine 230, isoleucine 238 to phenylalanine 258, phenylalanine 279 to phenylalanine 299, and valine 309 to phenylalanine 329. An N-linked (GlcNAc...) asparagine glycan is attached at asparagine 351. The next 4 helical transmembrane spans lie at tyrosine 362–serine 382, alanine 393–leucine 413, phenylalanine 431–proline 451, and leucine 460–isoleucine 480. A compositionally biased stretch (basic and acidic residues) spans leucine 649 to alanine 661. Disordered regions lie at residues leucine 649–proline 709 and aspartate 736–proline 813. Positions valine 687–aspartate 696 are enriched in polar residues. Composition is skewed to basic and acidic residues over residues lysine 770–serine 781 and arginine 797–proline 813.

It belongs to the monovalent cation:proton antiporter 1 (CPA1) transporter (TC 2.A.36) family. Interacts with CHP1 and CHP2. As to expression, predominantly in small intestine, colon, and stomach, with much lower levels in skeletal muscle, kidney, brain, testis, uterus, heart and lung.

It localises to the apical cell membrane. It carries out the reaction Na(+)(in) + H(+)(out) = Na(+)(out) + H(+)(in). Its activity is regulated as follows. Li(+) activates Na(+)/H(+) exchanger. Functionally, plasma membrane Na(+)/H(+) antiporter. Mediates the electroneutral exchange of intracellular H(+) ions for extracellular Na(+). Major apical Na(+)/H(+) exchanger in the base of the colonic crypt. Controls in the colonic crypt intracellular pH (pHi) to direct colonic epithelial cell differentiation into the absorptive enterocyte lineage at the expense of the secretory lineage. The protein is Sodium/hydrogen exchanger 2 (Slc9a2) of Rattus norvegicus (Rat).